A 357-amino-acid polypeptide reads, in one-letter code: 3-isopropylmalate dehydrogenase (357 aa).

NAD(+) is bound at residue 76 to 89 (GPQWDTIDPALRPE). R96, R106, R134, and D224 together coordinate substrate. Mg(2+)-binding residues include D224, D248, and D252. Position 282 to 294 (282 to 294 (GSAPDIAGQGVAN)) interacts with NAD(+).

This sequence belongs to the isocitrate and isopropylmalate dehydrogenases family. LeuB type 1 subfamily. As to quaternary structure, homodimer. It depends on Mg(2+) as a cofactor. Mn(2+) serves as cofactor.

The protein localises to the cytoplasm. It carries out the reaction (2R,3S)-3-isopropylmalate + NAD(+) = 4-methyl-2-oxopentanoate + CO2 + NADH. It participates in amino-acid biosynthesis; L-leucine biosynthesis; L-leucine from 3-methyl-2-oxobutanoate: step 3/4. Catalyzes the oxidation of 3-carboxy-2-hydroxy-4-methylpentanoate (3-isopropylmalate) to 3-carboxy-4-methyl-2-oxopentanoate. The product decarboxylates to 4-methyl-2 oxopentanoate. This is 3-isopropylmalate dehydrogenase from Xylella fastidiosa (strain 9a5c).